A 335-amino-acid polypeptide reads, in one-letter code: N-acetylmuramoyl-L-alanine amidase sle1 (335 aa).

A signal peptide spans Met1–Ala25. A LysM 1 domain is found at Thr27–Val70. The span at Ser71–Asn86 shows a compositional bias: low complexity. The disordered stretch occupies residues Ser71 to Gly90. 2 LysM domains span residues Ser91 to Val134 and Ser158 to Val201. In terms of domain architecture, Peptidase C51 spans Ala211–His335.

The protein resides in the secreted. Its subcellular location is the cell surface. The catalysed reaction is Hydrolyzes the link between N-acetylmuramoyl residues and L-amino acid residues in certain cell-wall glycopeptides.. In terms of biological role, peptidoglycan hydrolase involved in the splitting of the septum during cell division. The sequence is that of N-acetylmuramoyl-L-alanine amidase sle1 (sle1) from Staphylococcus aureus (strain bovine RF122 / ET3-1).